A 418-amino-acid chain; its full sequence is Secreted beta-glucosidase SUN41 (418 aa).

An N-terminal signal peptide occupies residues 1–23; sequence MRFSQATVLAFAALSLAAPAFEA. The span at 81–97 shows a compositional bias: low complexity; that stretch reads SEETSSTSTSISSTTTI. Positions 81-150 are disordered; sequence SEETSSTSTS…SGSTNGIEGD (70 aa). N-linked (GlcNAc...) asparagine glycosylation occurs at Asn-100. Residues 112 to 126 are compositionally biased toward polar residues; it reads SLPSGTIKPSSFATE. Positions 127-136 are enriched in low complexity; sequence SQSQSQSSST.

This sequence belongs to the SUN family. Post-translationally, predicted to be a substrate for cleavage by KEX2.

Its subcellular location is the secreted. It localises to the cell wall. In terms of biological role, cell surface beta-glucosidase involved in cytokinesis, cell wall biogenesis, adhesion to host tissue, and biofilm formation; thus playing an important role in the host-pathogen interaction. Has hydrolytic activity on linear (1-&gt;3)-beta-D-glucans such as laminaribiose and other laminarioligosaccharides. The polypeptide is Secreted beta-glucosidase SUN41 (Candida albicans (strain SC5314 / ATCC MYA-2876) (Yeast)).